A 269-amino-acid polypeptide reads, in one-letter code: Tryptophan synthase alpha chain (269 aa).

Catalysis depends on proton acceptor residues Glu-49 and Asp-60.

It belongs to the TrpA family. As to quaternary structure, tetramer of two alpha and two beta chains.

It catalyses the reaction (1S,2R)-1-C-(indol-3-yl)glycerol 3-phosphate + L-serine = D-glyceraldehyde 3-phosphate + L-tryptophan + H2O. Its pathway is amino-acid biosynthesis; L-tryptophan biosynthesis; L-tryptophan from chorismate: step 5/5. In terms of biological role, the alpha subunit is responsible for the aldol cleavage of indoleglycerol phosphate to indole and glyceraldehyde 3-phosphate. This chain is Tryptophan synthase alpha chain, found in Ectopseudomonas mendocina (strain ymp) (Pseudomonas mendocina).